We begin with the raw amino-acid sequence, 514 residues long: Triacylglyceride transporter MAB_2807 (514 aa).

The next 11 membrane-spanning stretches (helical) occupy residues 19–39, 58–78, 88–108, 118–138, 157–177, 178–198, 210–230, 239–259, 278–298, 316–336, and 344–364; these read IAIGAGSLAVLLGALDTYVVV, QVTPIVTGYLLGYIAAMPLLG, LILQLALAGFAIGSVITALST, VIQGVASGALLPVTLALGADL, LGSVLGPLYGVLCVWLFGSWT, AIFWVNVPLAIIAIVLVQFSV, VDVVGGALLAVALGLLVVGLY, LPEWALPVLSGSGVAFLAFIL, PFFAALAASLAAGAALMVTLV, VFLLSRFLVALPIGAVIGGWL, and IIAVIGMLIAAFGYYLISGWP. The beta-hairpin stretch occupies residues 371–380; it reads VHNFGFFTLP. 3 helical membrane passes run 385–405, 420–440, and 485–505; these read DLVVAGIGLGLVIGPLSSAAL, VVVARMTGMLIGMAALGGWGI, and MFAITAVVCVIAAVIAIFVGS.

This sequence belongs to the major facilitator superfamily. P55 (TC 2.A.1.3.34) family.

It is found in the cell inner membrane. Functionally, in association with lipoprotein LprG probably transports triacyglycerides (TAG) across the inner cell membrane into the periplasm; TAG probably regulates lipid metabolism and growth regulation and plays a structural role in the outer membrane. TAG (and maybe other lipids) enters the central cavity of the P55 transporter from within the cell inner membrane via clefts on the cytoplasmic face of P55 between TM5-TM8 and TM2-TM11. From there the lipid is probably transferred to the hydrophobic cavity of LprG. Involved in drug susceptibilty, its expression partially complements the antibiotic susceptibilty of a double lprG-mfs deletion. Probably does not function as a bona fide drug efflux pump, but instead plays a role in outer membrane biogenesis. Probably required with LprG for normal surface localization of lipoarabinomannan (LAM). The sequence is that of Triacylglyceride transporter MAB_2807 from Mycobacteroides abscessus (strain ATCC 19977 / DSM 44196 / CCUG 20993 / CIP 104536 / JCM 13569 / NCTC 13031 / TMC 1543 / L948) (Mycobacterium abscessus).